The chain runs to 347 residues: uncharacterized protein (347 aa).

2 coiled-coil regions span residues 148-201 and 261-298; these read DQQS…EKDG and LENL…DTFS. The disordered stretch occupies residues 151–203; that stretch reads SISNLRKEEKEKQKENENENENENENENENEKENQELDKKVNQTNDNEKDGDE. Residues 155–167 show a composition bias toward basic and acidic residues; that stretch reads LRKEEKEKQKENE. The segment covering 168 to 178 has biased composition (acidic residues); sequence NENENENENEN. A compositionally biased stretch (basic and acidic residues) spans 179–191; sequence ENEKENQELDKKV.

This is an uncharacterized protein from Dictyostelium discoideum (Social amoeba).